The chain runs to 911 residues: Protein translocase subunit SecA (911 aa).

ATP is bound by residues glutamine 87, glycine 105–threonine 109, and aspartate 510. Residues cysteine 896, cysteine 898, cysteine 907, and histidine 908 each contribute to the Zn(2+) site.

Belongs to the SecA family. As to quaternary structure, monomer and homodimer. Part of the essential Sec protein translocation apparatus which comprises SecA, SecYEG and auxiliary proteins SecDF-YajC and YidC. The cofactor is Zn(2+).

Its subcellular location is the cell inner membrane. It localises to the cytoplasm. The catalysed reaction is ATP + H2O + cellular proteinSide 1 = ADP + phosphate + cellular proteinSide 2.. In terms of biological role, part of the Sec protein translocase complex. Interacts with the SecYEG preprotein conducting channel. Has a central role in coupling the hydrolysis of ATP to the transfer of proteins into and across the cell membrane, serving both as a receptor for the preprotein-SecB complex and as an ATP-driven molecular motor driving the stepwise translocation of polypeptide chains across the membrane. This is Protein translocase subunit SecA from Acinetobacter baumannii (strain SDF).